The chain runs to 292 residues: uncharacterized protein (292 aa).

The disordered stretch occupies residues 62 to 81 (ESSSDSDMGFHESQQNQKSN).

This is an uncharacterized protein from Homo sapiens (Human).